Reading from the N-terminus, the 368-residue chain is Anhydro-N-acetylmuramic acid kinase (368 aa).

An ATP-binding site is contributed by 11 to 18; the sequence is GTSLDGID.

The protein belongs to the anhydro-N-acetylmuramic acid kinase family.

The catalysed reaction is 1,6-anhydro-N-acetyl-beta-muramate + ATP + H2O = N-acetyl-D-muramate 6-phosphate + ADP + H(+). Its pathway is amino-sugar metabolism; 1,6-anhydro-N-acetylmuramate degradation. It functions in the pathway cell wall biogenesis; peptidoglycan recycling. Catalyzes the specific phosphorylation of 1,6-anhydro-N-acetylmuramic acid (anhMurNAc) with the simultaneous cleavage of the 1,6-anhydro ring, generating MurNAc-6-P. Is required for the utilization of anhMurNAc either imported from the medium or derived from its own cell wall murein, and thus plays a role in cell wall recycling. The polypeptide is Anhydro-N-acetylmuramic acid kinase (Sulfurimonas denitrificans (strain ATCC 33889 / DSM 1251) (Thiomicrospira denitrificans (strain ATCC 33889 / DSM 1251))).